Here is a 533-residue protein sequence, read N- to C-terminus: Probable nucleolar protein 5-2 (533 aa).

A Nop domain is found at 281–399; sequence IAPNLTALVG…LEARLRNLEG (119 aa). 2 disordered regions span residues 401-433 and 445-533; these read DLGRLSGSSKGKPKIEVYNKDKKMGSGGLITPA and GETS…KSKD. The segment covering 413 to 424 has biased composition (basic and acidic residues); the sequence is PKIEVYNKDKKM. The span at 521–533 shows a compositional bias: basic residues; the sequence is KKDKKEKKKKSKD.

It belongs to the NOP5/NOP56 family.

The protein localises to the nucleus. It is found in the nucleolus. Required for 60S ribosomal subunit biogenesis. This chain is Probable nucleolar protein 5-2 (NOP5-2), found in Arabidopsis thaliana (Mouse-ear cress).